Reading from the N-terminus, the 278-residue chain is Bifunctional protein FolD (278 aa).

Residues 164–166 (GRS) and Thr-228 each bind NADP(+).

It belongs to the tetrahydrofolate dehydrogenase/cyclohydrolase family. Homodimer.

The catalysed reaction is (6R)-5,10-methylene-5,6,7,8-tetrahydrofolate + NADP(+) = (6R)-5,10-methenyltetrahydrofolate + NADPH. It carries out the reaction (6R)-5,10-methenyltetrahydrofolate + H2O = (6R)-10-formyltetrahydrofolate + H(+). It functions in the pathway one-carbon metabolism; tetrahydrofolate interconversion. Catalyzes the oxidation of 5,10-methylenetetrahydrofolate to 5,10-methenyltetrahydrofolate and then the hydrolysis of 5,10-methenyltetrahydrofolate to 10-formyltetrahydrofolate. The sequence is that of Bifunctional protein FolD from Mycoplasmopsis synoviae (strain 53) (Mycoplasma synoviae).